We begin with the raw amino-acid sequence, 178 residues long: Inner membrane-spanning protein YciB (178 aa).

The next 5 membrane-spanning stretches (helical) occupy residues 22-42, 50-70, 76-96, 121-141, and 149-169; these read IFWA…YSWY, MTLV…YFHN, WKVT…QWVM, IAWA…AFWL, and FKVF…GVYI.

This sequence belongs to the YciB family.

It is found in the cell inner membrane. Plays a role in cell envelope biogenesis, maintenance of cell envelope integrity and membrane homeostasis. This Cronobacter sakazakii (strain ATCC BAA-894) (Enterobacter sakazakii) protein is Inner membrane-spanning protein YciB.